The following is a 242-amino-acid chain: Probable transcriptional regulatory protein XCV3282 (242 aa).

This sequence belongs to the TACO1 family.

It is found in the cytoplasm. In Xanthomonas euvesicatoria pv. vesicatoria (strain 85-10) (Xanthomonas campestris pv. vesicatoria), this protein is Probable transcriptional regulatory protein XCV3282.